The sequence spans 258 residues: 5'-nucleotidase SurE (258 aa).

The a divalent metal cation site is built by D16, D17, S47, and N99.

It belongs to the SurE nucleotidase family. Requires a divalent metal cation as cofactor.

The protein resides in the cytoplasm. It catalyses the reaction a ribonucleoside 5'-phosphate + H2O = a ribonucleoside + phosphate. Nucleotidase that shows phosphatase activity on nucleoside 5'-monophosphates. The polypeptide is 5'-nucleotidase SurE (Coxiella burnetii (strain Dugway 5J108-111)).